Consider the following 127-residue polypeptide: Holo-[acyl-carrier-protein] synthase (127 aa).

Mg(2+) is bound by residues Asp-8 and Glu-56.

Belongs to the P-Pant transferase superfamily. AcpS family. The cofactor is Mg(2+).

It localises to the cytoplasm. It catalyses the reaction apo-[ACP] + CoA = holo-[ACP] + adenosine 3',5'-bisphosphate + H(+). Functionally, transfers the 4'-phosphopantetheine moiety from coenzyme A to a Ser of acyl-carrier-protein. This chain is Holo-[acyl-carrier-protein] synthase, found in Caldanaerobacter subterraneus subsp. tengcongensis (strain DSM 15242 / JCM 11007 / NBRC 100824 / MB4) (Thermoanaerobacter tengcongensis).